Reading from the N-terminus, the 400-residue chain is SEC14-like protein 3 (400 aa).

The CRAL-TRIO domain maps to 76–249 (PPEVIQKYMP…HFGGTLTDPD (174 aa)). A Phosphoserine modification is found at Ser223. Residues 275–383 (KTQYEHSVQI…AKKVSFTVEV (109 aa)) form the GOLD domain.

Post-translationally, the N-terminus seems to be blocked. As to expression, detected in a layer of supportive cells in olfactory epithelium, in the apical region of the trachea and in the surface layer of ciliated bronchial epithelium in the lung.

Functionally, probable hydrophobic ligand-binding protein; may play a role in the transport of hydrophobic ligands like tocopherol, squalene and phospholipids. In Rattus norvegicus (Rat), this protein is SEC14-like protein 3 (Sec14l3).